Reading from the N-terminus, the 309-residue chain is Porphobilinogen deaminase (309 aa).

Position 244 is an S-(dipyrrolylmethanemethyl)cysteine (Cys-244).

This sequence belongs to the HMBS family. In terms of assembly, monomer. It depends on dipyrromethane as a cofactor.

It carries out the reaction 4 porphobilinogen + H2O = hydroxymethylbilane + 4 NH4(+). It participates in porphyrin-containing compound metabolism; protoporphyrin-IX biosynthesis; coproporphyrinogen-III from 5-aminolevulinate: step 2/4. Its function is as follows. Tetrapolymerization of the monopyrrole PBG into the hydroxymethylbilane pre-uroporphyrinogen in several discrete steps. The protein is Porphobilinogen deaminase of Listeria monocytogenes serotype 4a (strain HCC23).